The sequence spans 357 residues: Peptide chain release factor 1 (357 aa).

Gln234 carries the post-translational modification N5-methylglutamine.

It belongs to the prokaryotic/mitochondrial release factor family. In terms of processing, methylated by PrmC. Methylation increases the termination efficiency of RF1.

It localises to the cytoplasm. Functionally, peptide chain release factor 1 directs the termination of translation in response to the peptide chain termination codons UAG and UAA. This is Peptide chain release factor 1 from Lactococcus lactis subsp. cremoris (strain MG1363).